We begin with the raw amino-acid sequence, 447 residues long: MASQEEFYRTQIFGTVFEITNRYADLNPVGMGAFGLVCSAVDTYTQQPVAIKKIMKPFSTAVLAKRTYRELKLLKHLRHENLICLEDIFLSPLEDIYFVTELQGTDLHRLLQTRPLEKQFLQYFLYQILRGLKYVHSAGVIHRDLKPSNILINENCDLKICDFGLARIQDPQMTGYVSTRYYRAPEIMLTWQKYNVEVDIWSAGCIFAEMIEGKPLFPGKDHVHQFSIITDLLGSPPKDVIDTICSENTLKFVTSLPHRDPVPFTERFKNLKPDAVDLLEKMLVFDPKKRITAGDALTHPYLAPYHDPTDEPVADAKFDWNFNDADLPVDTWRVMMYSEILDFHQVPDSQINPNDTFDDQVAAATAAAEAARQQQQQKQQQQKQQQQRHQGVEHGAQHVQLQHGAKQLSADPLVGDSNGGIPLNVSAANETLNNFANQAAQYATDFE.

The Protein kinase domain maps to 23–302 (YADLNPVGMG…AGDALTHPYL (280 aa)). ATP contacts are provided by residues 29–37 (VGMGAFGLV) and Lys52. Asp144 (proton acceptor) is an active-site residue. Thr174 is modified (phosphothreonine). The short motif at 174–176 (TGY) is the TXY element. Tyr176 carries the phosphotyrosine modification. The segment covering 373–389 (QQQQQKQQQQKQQQQRH) has biased composition (low complexity). The segment at 373 to 404 (QQQQQKQQQQKQQQQRHQGVEHGAQHVQLQHG) is disordered.

This sequence belongs to the protein kinase superfamily. Ser/Thr protein kinase family. MAP kinase subfamily. HOG1 sub-subfamily. Requires Mg(2+) as cofactor. Post-translationally, dually phosphorylated on Thr-174 and Tyr-176, which activates the enzyme.

The protein resides in the cytoplasm. It is found in the nucleus. It catalyses the reaction L-seryl-[protein] + ATP = O-phospho-L-seryl-[protein] + ADP + H(+). The catalysed reaction is L-threonyl-[protein] + ATP = O-phospho-L-threonyl-[protein] + ADP + H(+). With respect to regulation, activated by tyrosine and threonine phosphorylation. Its function is as follows. Proline-directed serine/threonine-protein kinase involved in a signal transduction pathway that is activated by changes in the osmolarity of the extracellular environment. Controls osmotic regulation of transcription of target genes. The chain is Mitogen-activated protein kinase HOG1 (HOG1) from Eremothecium gossypii (strain ATCC 10895 / CBS 109.51 / FGSC 9923 / NRRL Y-1056) (Yeast).